The sequence spans 499 residues: Flotillin-like protein 2 (499 aa).

Cys37 is lipidated: S-palmitoyl cysteine. Positions 243-319 (LREEAKVKAE…LRLTEKLKAE (77 aa)) form a coiled coil.

This sequence belongs to the band 7/mec-2 family. Flotillin subfamily. Post-translationally, may be palmitoylated.

It is found in the cell membrane. It localises to the membrane. Its subcellular location is the caveola. May act as a scaffolding protein within caveolar membranes, functionally participating in formation of caveolae or caveolae-like vesicles. The sequence is that of Flotillin-like protein 2 (FLOT2) from Oryza sativa subsp. japonica (Rice).